Consider the following 399-residue polypeptide: Phosphoglycerate kinase (399 aa).

Substrate contacts are provided by residues 22 to 24, arginine 37, 60 to 63, arginine 119, and arginine 152; these read DLN and HFGR. ATP-binding positions include lysine 202, glutamate 324, and 354–357; that span reads GGDT.

This sequence belongs to the phosphoglycerate kinase family. As to quaternary structure, monomer.

It is found in the cytoplasm. It carries out the reaction (2R)-3-phosphoglycerate + ATP = (2R)-3-phospho-glyceroyl phosphate + ADP. It participates in carbohydrate degradation; glycolysis; pyruvate from D-glyceraldehyde 3-phosphate: step 2/5. The sequence is that of Phosphoglycerate kinase from Sinorhizobium medicae (strain WSM419) (Ensifer medicae).